The chain runs to 567 residues: Geranylgeranyl transferase type-2 subunit alpha (567 aa).

PFTA repeat units lie at residues 44–78 (LDES…QLET), 88–122 (LVKA…RLPE), 124–158 (NWTR…QAAV), 159–193 (PPAE…QLHP), 207–241 (VLLK…RADP), and 363–397 (VLQS…ALDP). Position 98 is a phosphoserine (Ser98). LRR repeat units lie at residues 442 to 463 (EVRV…EQLL), 464 to 486 (LVTH…AALR), 487 to 508 (CLEV…TNLP), 509 to 530 (RLQE…QPLA), and 534 to 555 (RLVL…LEQL).

Belongs to the protein prenyltransferase subunit alpha family. As to quaternary structure, heterotrimer composed of RABGGTA, RABGGTB and CHM; within this trimer, RABGGTA and RABGGTB form the catalytic component B, while CHM (component A) mediates peptide substrate binding. The Rab GGTase dimer (RGGT) interacts with CHM (component A) prior to Rab protein binding; the association is stabilized by geranylgeranyl pyrophosphate (GGpp). The CHM:RGGT:Rab complex is destabilized by GGpp. Interacts with non-phosphorylated form of RAB8A; phosphorylation of RAB8A at 'Thr-72' disrupts this interaction.

It carries out the reaction geranylgeranyl diphosphate + L-cysteinyl-[protein] = S-geranylgeranyl-L-cysteinyl-[protein] + diphosphate. Its activity is regulated as follows. The enzymatic reaction requires the aid of a Rab escort protein (also called component A), such as CHM. Its function is as follows. Catalyzes the transfer of a geranylgeranyl moiety from geranylgeranyl diphosphate to both cysteines of Rab proteins with the C-terminal sequence -XXCC, -XCXC and -CCXX, such as RAB1A, RAB3A, RAB5A and RAB7A. This Homo sapiens (Human) protein is Geranylgeranyl transferase type-2 subunit alpha (RABGGTA).